The following is a 297-amino-acid chain: MNYFEGTVLGLVQGLTEFLPVSSSAHLRITAALAGWDDPGAAFTAVTQIGTETAVLIYFRRDIARIVRAWALSWTRREMRKDTDARVGWLVLLGTIPIGLLGVTLQDAIEGPFRDLRLIATTLIVLGLILGGADWYASKGRPRGRHSLPRPRKTLRDLSVRDGLLYGLAQSAALIPGVSRSGATISGGLLLGYTREAAARYSFLLAMPAVLASGVFELKSIGGDREGGDGEEVSWGPTIVATVVAFATGYAAIAWFLRYISTRSFAPFVLYRVALGLLLLALLAGGAISADAGAAAD.

The next 6 helical transmembrane spans lie at 39-59 (PGAAFTAVTQIGTETAVLIYF), 89-109 (WLVLLGTIPIGLLGVTLQDAI), 118-138 (LIATTLIVLGLILGGADWYAS), 203-223 (FLLAMPAVLASGVFELKSIGG), 237-257 (PTIVATVVAFATGYAAIAWFL), and 268-288 (FVLYRVALGLLLLALLAGGAI).

It belongs to the UppP family.

The protein localises to the cell membrane. The catalysed reaction is di-trans,octa-cis-undecaprenyl diphosphate + H2O = di-trans,octa-cis-undecaprenyl phosphate + phosphate + H(+). Catalyzes the dephosphorylation of undecaprenyl diphosphate (UPP). Confers resistance to bacitracin. The protein is Undecaprenyl-diphosphatase 3 of Frankia alni (strain DSM 45986 / CECT 9034 / ACN14a).